A 253-amino-acid chain; its full sequence is NAD-dependent protein deacylase 2 (253 aa).

Residues 1–252 (MEDEIRKAAE…VEEVKRLRSE (252 aa)) form the Deacetylase sirtuin-type domain. NAD(+)-binding positions include 23–42 (GAGI…DGLW) and 100–103 (QNID). Histidine 118 functions as the Proton acceptor in the catalytic mechanism. Cysteine 126, cysteine 129, cysteine 150, and cysteine 153 together coordinate Zn(2+). Residues 191–193 (GSS), 217–219 (NAE), and alanine 235 each bind NAD(+).

This sequence belongs to the sirtuin family. Class III subfamily. The cofactor is Zn(2+).

The protein resides in the cytoplasm. It catalyses the reaction N(6)-acetyl-L-lysyl-[protein] + NAD(+) + H2O = 2''-O-acetyl-ADP-D-ribose + nicotinamide + L-lysyl-[protein]. NAD-dependent protein deacetylase which modulates the activities of several proteins which are inactive in their acetylated form. Deacetylates the N-terminal lysine residue of Alba, the major archaeal chromatin protein and that, in turn, increases Alba's DNA binding affinity, thereby repressing transcription. The sequence is that of NAD-dependent protein deacylase 2 from Archaeoglobus fulgidus (strain ATCC 49558 / DSM 4304 / JCM 9628 / NBRC 100126 / VC-16).